A 187-amino-acid chain; its full sequence is Elongation factor P (187 aa).

The protein belongs to the elongation factor P family.

The protein resides in the cytoplasm. Its pathway is protein biosynthesis; polypeptide chain elongation. Its function is as follows. Involved in peptide bond synthesis. Stimulates efficient translation and peptide-bond synthesis on native or reconstituted 70S ribosomes in vitro. Probably functions indirectly by altering the affinity of the ribosome for aminoacyl-tRNA, thus increasing their reactivity as acceptors for peptidyl transferase. The protein is Elongation factor P of Gloeobacter violaceus (strain ATCC 29082 / PCC 7421).